Here is a 226-residue protein sequence, read N- to C-terminus: Transcriptional activator plp-1 (226 aa).

It belongs to the PUR DNA-binding protein family.

Its subcellular location is the nucleus. The protein localises to the chromosome. Probable transcription activator. Binds telomeric DNA containing repeats of the sequence, 5'-TTAGGC-3'. Binds to end-1 promoter, activating end-1 expression, which is required for endoderm specification during embryonic development. The sequence is that of Transcriptional activator plp-1 from Caenorhabditis elegans.